The chain runs to 485 residues: NADH-quinone oxidoreductase subunit N (485 aa).

A run of 14 helical transmembrane segments spans residues 8-28, 35-55, 71-91, 105-125, 127-147, 159-179, 203-223, 235-255, 271-291, 297-317, 326-346, 373-393, 408-430, and 455-475; these read LIAL…MLSI, FLNA…LWFV, GFAM…CTFA, FYLL…ANHL, TLFL…GYAF, YTIL…LVYA, LLAG…LVPF, PAPV…GVVM, VVLG…ALSQ, LLGY…IALQ, VGVY…VVSL, AAVM…LGFI, WWLV…RVAV, and IVVL…QPLI.

Belongs to the complex I subunit 2 family. As to quaternary structure, NDH-1 is composed of 13 different subunits. Subunits NuoA, H, J, K, L, M, N constitute the membrane sector of the complex.

The protein localises to the cell inner membrane. It catalyses the reaction a quinone + NADH + 5 H(+)(in) = a quinol + NAD(+) + 4 H(+)(out). Functionally, NDH-1 shuttles electrons from NADH, via FMN and iron-sulfur (Fe-S) centers, to quinones in the respiratory chain. The immediate electron acceptor for the enzyme in this species is believed to be ubiquinone. Couples the redox reaction to proton translocation (for every two electrons transferred, four hydrogen ions are translocated across the cytoplasmic membrane), and thus conserves the redox energy in a proton gradient. The sequence is that of NADH-quinone oxidoreductase subunit N from Salmonella paratyphi A (strain ATCC 9150 / SARB42).